Reading from the N-terminus, the 409-residue chain is Tyrosine--tRNA ligase (409 aa).

Tyrosine 35 lines the L-tyrosine pocket. Positions 40-49 (CTAESLHVGS) match the 'HIGH' region motif. Residues tyrosine 172 and glutamine 176 each contribute to the L-tyrosine site. A 'KMSKS' region motif is present at residues 232-236 (KMGKT). Lysine 235 contacts ATP. The S4 RNA-binding domain occupies 343–409 (ISILDLVILS…KKKHIKVELI (67 aa)).

The protein belongs to the class-I aminoacyl-tRNA synthetase family. TyrS type 1 subfamily. As to quaternary structure, homodimer.

It localises to the cytoplasm. The catalysed reaction is tRNA(Tyr) + L-tyrosine + ATP = L-tyrosyl-tRNA(Tyr) + AMP + diphosphate + H(+). Functionally, catalyzes the attachment of tyrosine to tRNA(Tyr) in a two-step reaction: tyrosine is first activated by ATP to form Tyr-AMP and then transferred to the acceptor end of tRNA(Tyr). The sequence is that of Tyrosine--tRNA ligase from Pelagibacter ubique (strain HTCC1062).